A 361-amino-acid polypeptide reads, in one-letter code: tRNA-specific 2-thiouridylase MnmA (361 aa).

ATP contacts are provided by residues 6-13 and Ile-32; that span reads LVSGGVDS. The interval 93–95 is interaction with target base in tRNA; sequence NPD. Cys-98 serves as the catalytic Nucleophile. A disulfide bridge links Cys-98 with Cys-193. Gly-121 contacts ATP. Positions 143–145 are interaction with tRNA; the sequence is KDQ. The active-site Cysteine persulfide intermediate is the Cys-193.

Belongs to the MnmA/TRMU family.

The protein localises to the cytoplasm. The enzyme catalyses S-sulfanyl-L-cysteinyl-[protein] + uridine(34) in tRNA + AH2 + ATP = 2-thiouridine(34) in tRNA + L-cysteinyl-[protein] + A + AMP + diphosphate + H(+). Its function is as follows. Catalyzes the 2-thiolation of uridine at the wobble position (U34) of tRNA, leading to the formation of s(2)U34. The sequence is that of tRNA-specific 2-thiouridylase MnmA from Porphyromonas gingivalis (strain ATCC 33277 / DSM 20709 / CIP 103683 / JCM 12257 / NCTC 11834 / 2561).